A 350-amino-acid chain; its full sequence is UPF0284 protein MJ1598 (350 aa).

This sequence belongs to the UPF0284 family.

The protein is UPF0284 protein MJ1598 of Methanocaldococcus jannaschii (strain ATCC 43067 / DSM 2661 / JAL-1 / JCM 10045 / NBRC 100440) (Methanococcus jannaschii).